A 243-amino-acid polypeptide reads, in one-letter code: Carboxy-S-adenosyl-L-methionine synthase (243 aa).

S-adenosyl-L-methionine contacts are provided by residues Tyr35, 68 to 70 (GCS), 92 to 93 (DN), and Arg199.

The protein belongs to the class I-like SAM-binding methyltransferase superfamily. Cx-SAM synthase family. In terms of assembly, homodimer.

The enzyme catalyses prephenate + S-adenosyl-L-methionine = carboxy-S-adenosyl-L-methionine + 3-phenylpyruvate + H2O. Catalyzes the conversion of S-adenosyl-L-methionine (SAM) to carboxy-S-adenosyl-L-methionine (Cx-SAM). This is Carboxy-S-adenosyl-L-methionine synthase from Helicobacter pylori (strain P12).